We begin with the raw amino-acid sequence, 460 residues long: MPSVGVKLYSVFFKFLLKHRLQNRIQSSGDESSSDPFGVTTRPEESVAAPNPLFTDGVATKDIHIDPLTSLSVRIFLPESALTPLEPSTSACVYSGKARTLNNIAGSDLLSRRNSLGSSNSLLSHKVESRRNSYGYTTGSSSPEAGSSDVYRGYAPSSSGGNSRKLPVMLQFHGGGWVSGSNDSVANDFFCRRMAKHCDIIVLAVGYRLAPENRYPAACEDGFKVLKWLGKQANLAECNKSMGNSRRPGGEVKKSEVNKHIVDAFGASLVEPWLANHADPSRCVLLGVSCGANIADYVARKAIEVGQNLDPVKVVAQVLMYPFFIGSVPTQSEIKQANSYFYDKPMCILAWKLFLPEEEFSLDHQAANPLVPGRSPPLKFMPPTLTIVAEHDWMRDRAIAYSEELRKVNVDAPVLEYKDAVHEFATLDMLLRTPQAQACAEDIAIWAKKYISLRGHEFSY.

Composition is skewed to polar residues over residues 26–35 (QSSGDESSSD) and 132–145 (NSYG…SPEA). Disordered regions lie at residues 26–52 (QSSG…APNP) and 132–161 (NSYG…SSGG). Residues 173–175 (HGG) carry the Involved in the stabilization of the negatively charged intermediate by the formation of the oxyanion hole motif. Catalysis depends on residues Ser289, Asp392, and His422.

It belongs to the 'GDXG' lipolytic enzyme family. In terms of tissue distribution, expressed in roots, leaves, stems, flowers and siliques.

The enzyme catalyses a carboxylic ester + H2O = an alcohol + a carboxylate + H(+). Functionally, carboxylesterase acting on esters with varying acyl chain length. This chain is Probable carboxylesterase 11 (CXE11), found in Arabidopsis thaliana (Mouse-ear cress).